Consider the following 224-residue polypeptide: Phosphoglycolate phosphatase (224 aa).

Residue Asp8 is the Nucleophile of the active site. 4 residues coordinate Mg(2+): Asp8, Asp10, Gly11, and Gly43. Substrate is bound at residue Lys151. Mg(2+) contacts are provided by Asp174, Ser175, and Asp178.

It belongs to the HAD-like hydrolase superfamily. Archaeal SPP-like hydrolase family. Homodimer. It depends on Mg(2+) as a cofactor.

It carries out the reaction 2-phosphoglycolate + H2O = glycolate + phosphate. With respect to regulation, inhibited by Ca(2+) ions and by high chloride ion concentration. By contrast, low chloride concentration (up to 50 mM) slightly activate the enzyme. In terms of biological role, catalyzes the dephosphorylation of 2-phosphoglycolate. Also has significant, but less efficient, pyrophosphatase activity, since it is able to catalyze the release of phosphate from inorganic pyrophosphate (PPi). This Thermoplasma acidophilum (strain ATCC 25905 / DSM 1728 / JCM 9062 / NBRC 15155 / AMRC-C165) protein is Phosphoglycolate phosphatase.